The chain runs to 639 residues: Complex I assembly factor Egm, mitochondrial (639 aa).

The N-terminal 26 residues, 1–26 (MRPNLFSGASRLLTYSRNGKLLTRGR), are a transit peptide targeting the mitochondrion. The disordered stretch occupies residues 23–65 (TRGRSTKATSSSLDSQHQDAATTEGGRAESVEESPEQQRKLPT). Residues 28-43 (TKATSSSLDSQHQDAA) show a composition bias toward polar residues. Positions 48–65 (GRAESVEESPEQQRKLPT) are enriched in basic and acidic residues.

The protein belongs to the acyl-CoA dehydrogenase family. In terms of assembly, associates with mitochondrial complex I assembly intermediates during its biogenesis. The cofactor is FAD.

It is found in the mitochondrion. In terms of biological role, as part of the MCIA complex, primarily participates in the assembly of the mitochondrial complex I and therefore plays a role in oxidative phosphorylation. The sequence is that of Complex I assembly factor Egm, mitochondrial from Drosophila melanogaster (Fruit fly).